A 72-amino-acid chain; its full sequence is Cold shock-like protein CspD (72 aa).

In terms of domain architecture, CSD spans 4–64 (GIVKWFNNAK…SDKGSHATKI (61 aa)).

The protein resides in the cytoplasm. The polypeptide is Cold shock-like protein CspD (cspD) (Haemophilus influenzae (strain ATCC 51907 / DSM 11121 / KW20 / Rd)).